Reading from the N-terminus, the 316-residue chain is Coiled-coil domain-containing protein 42 (316 aa).

Coiled-coil stretches lie at residues 39–146 (SPSI…SAKL) and 178–232 (LVSM…DRAR).

This sequence belongs to the CFAP73 family. Interacts with ODF1 and ODF2. Interacts with CCDC38. Interacts with CCDC146. Interacts with CFAP53.

The protein localises to the cytoplasm. The protein resides in the perinuclear region. Its subcellular location is the cytoskeleton. It is found in the cell projection. It localises to the cilium. The protein localises to the flagellum. The protein resides in the microtubule organizing center. Its subcellular location is the centrosome. Its function is as follows. Essential for male fertility. Required for sperm development. The chain is Coiled-coil domain-containing protein 42 from Homo sapiens (Human).